Consider the following 812-residue polypeptide: Probable inorganic carbon transporter subunit DabA (812 aa).

Residues C337, D339, H499, and C514 each coordinate Zn(2+).

The protein belongs to the inorganic carbon transporter (TC 9.A.2) DabA family. In terms of assembly, forms a complex with DabB. Requires Zn(2+) as cofactor.

Its subcellular location is the cell inner membrane. In terms of biological role, part of an energy-coupled inorganic carbon pump. The protein is Probable inorganic carbon transporter subunit DabA of Xanthomonas oryzae pv. oryzae (strain MAFF 311018).